We begin with the raw amino-acid sequence, 277 residues long: Large ribosomal subunit protein uL2 (277 aa).

The interval Gly-222–Lys-277 is disordered.

This sequence belongs to the universal ribosomal protein uL2 family. In terms of assembly, part of the 50S ribosomal subunit. Forms a bridge to the 30S subunit in the 70S ribosome.

In terms of biological role, one of the primary rRNA binding proteins. Required for association of the 30S and 50S subunits to form the 70S ribosome, for tRNA binding and peptide bond formation. It has been suggested to have peptidyltransferase activity; this is somewhat controversial. Makes several contacts with the 16S rRNA in the 70S ribosome. This is Large ribosomal subunit protein uL2 from Bartonella tribocorum (strain CIP 105476 / IBS 506).